The sequence spans 682 residues: Nephrocystin-1-like protein (682 aa).

A coiled-coil region spans residues 10-100 (LQDAINRFPQ…ALSPEKEQLS (91 aa)). The tract at residues 96-188 (KEQLSFSVSV…PLESKTLNER (93 aa)) is disordered. Over residues 128–148 (NDDESEDSDNDSEIIETDVQL) the composition is skewed to acidic residues. The 61-residue stretch at 215–275 (VRGNVFVAID…PKTYLQHVKE (61 aa)) folds into the SH3 domain.

The protein belongs to the nephrocystin-1 family. Expressed in ciliated sensory neurons of the head (amphid neurons) and the tail in hermaphrodites (phasmid neurons) and males (sensory ray neurons).

Functionally, plays a role in the extension of dendrites from phasmid ciliated sensory neurons. May be necessary for initial assembly of the cilium. This is Nephrocystin-1-like protein from Caenorhabditis elegans.